The chain runs to 92 residues: Arrestin-C (92 aa).

This sequence belongs to the arrestin family. In terms of assembly, homodimer; disulfide-linked in response to retinal illumination. Interacts with CXCR4; the interaction is dependent on the C-terminal phosphorylation of CXCR4 and modulates the calcium ion mobilization activity of CXCR4. Interacts with GPR84. Retina and pineal gland.

Its subcellular location is the photoreceptor inner segment. The protein resides in the cell projection. It is found in the cilium. It localises to the photoreceptor outer segment. Functionally, may play a role in an as yet undefined retina-specific signal transduction. Could bind to photoactivated-phosphorylated red/green opsins. This chain is Arrestin-C (Arr3), found in Rattus norvegicus (Rat).